The chain runs to 1713 residues: uncharacterized protein (1713 aa).

The span at 1–12 (MNENEFSTNSLI) shows a compositional bias: polar residues. Disordered stretches follow at residues 1 to 35 (MNENEFSTNSLINQQGTNNNNNNNTNNNITNINFG), 79 to 200 (QQLN…KLSN), 226 to 290 (GNNN…QPLS), 309 to 557 (QYLS…PMSH), 713 to 734 (SNDQNDRVPIHQLGGATGKKDR), 808 to 952 (SPPM…SITT), and 1143 to 1190 (HHHH…SISR). 5 stretches are compositionally biased toward low complexity: residues 13–35 (NQQGTNNNNNNNTNNNITNINFG), 79–109 (QQLNTPPTTPNTSTPSTPTSSRNNNNNNNNN), 126–170 (NNSG…NSGN), 177–200 (NMSDITNDNSNSSSNAGSNSKLSN), and 226–264 (GNNNYHNGNNENGNNTFHVGNNLNNNNNNNNIGSSGGNN). Residues 265-276 (SHHHHNHSHHNS) are compositionally biased toward basic residues. Low complexity-rich tracts occupy residues 317–470 (NNIN…SPAS) and 478–489 (SNNFGGNHNNYN). A compositionally biased stretch (basic residues) spans 490–504 (HAHHSHHNNHAHHNT). The segment covering 505-553 (HNYNNNNNNNNNNNNNNNNNNNNSNNSNNNSNTNNNGNNGNNSNNNNNH) has biased composition (low complexity). Positions 544–825 (GNNSNNNNNH…QNPGRFLNHD (282 aa)) form a DNA-binding region, NDT80. Residues 822–832 (LNHDKSLKKDP) show a composition bias toward basic and acidic residues. Residues 838–874 (GGKGGGGSGSGGMGGGMGGGMGNNGSSGSSSNGGYGN) show a composition bias toward gly residues. Composition is skewed to low complexity over residues 898 to 946 (SPTT…PTLT) and 1148 to 1189 (QQQQ…SSIS). In terms of domain architecture, Peptidase S74 spans 1240–1355 (SDQRIKSNIR…RSLKKEKDHI (116 aa)). The next 3 helical transmembrane spans lie at 1416-1436 (TMFVFGFFIPICWIIGSFYLF), 1447-1467 (LMNFVATIIFILALSLMTFYV), and 1473-1493 (LIIAPALIVMGFVVCILVGFF). A compositionally biased stretch (low complexity) spans 1596–1605 (NSNNNINNNN). Disordered stretches follow at residues 1596-1634 (NSNNNINNNNQERLSDSSKSSFIDDFKKSSSNNHKDFHE) and 1646-1665 (IKGKKQSSSSAKTRSLSSSN). Basic and acidic residues predominate over residues 1617–1634 (FIDDFKKSSSNNHKDFHE).

It localises to the membrane. This is an uncharacterized protein from Dictyostelium discoideum (Social amoeba).